Consider the following 214-residue polypeptide: Late embryogenesis abundant protein At1g64065 (214 aa).

The chain crosses the membrane as a helical span at residues 41–61 (VYSLTIIVIIFALCLILSSIF).

This sequence belongs to the LEA type 2 family.

Its subcellular location is the membrane. This is Late embryogenesis abundant protein At1g64065 from Arabidopsis thaliana (Mouse-ear cress).